The chain runs to 109 residues: C-X-C motif chemokine 13 (109 aa).

The N-terminal stretch at 1–21 (MRLSTATLLLLLASCLSPGHG) is a signal peptide. Disulfide bonds link cysteine 32–cysteine 59 and cysteine 34–cysteine 75.

This sequence belongs to the intercrine alpha (chemokine CxC) family. In terms of tissue distribution, found in spleen (B-cell-rich zone or follicles), Peyer patches (strongest within germinal centers and extending to the mantle zone) and lymph nodes (in reticular pattern in follicles).

It localises to the secreted. Functionally, strongly chemotactic for B-lymphocytes, weakly for spleen monocytes and macrophages but no chemotactic activity for granulocytes. Binds to BLR1/CXCR5. May play a role in directing the migration of B-lymphocytes to follicles in secondary lymphoid organs. This Mus musculus (Mouse) protein is C-X-C motif chemokine 13 (Cxcl13).